Here is a 130-residue protein sequence, read N- to C-terminus: Small ribosomal subunit protein uS8 (130 aa).

This sequence belongs to the universal ribosomal protein uS8 family. Part of the 30S ribosomal subunit. Contacts proteins S5 and S12.

In terms of biological role, one of the primary rRNA binding proteins, it binds directly to 16S rRNA central domain where it helps coordinate assembly of the platform of the 30S subunit. This is Small ribosomal subunit protein uS8 from Onion yellows phytoplasma (strain OY-M).